Consider the following 711-residue polypeptide: K(+)-insensitive pyrophosphate-energized proton pump (711 aa).

Helical transmembrane passes span 7–27 (LIYGVIVIAALVIIGLIKFIF), 58–78 (IASLALIVAVIIVVANYYGHL), 85–105 (ALSFALHVGFAFITGAFCSAL), 145–165 (LAVTALSLFGVATLFLAYGGL), and 179–199 (IVGFGFGASFVALFAQLGGGI). Lys-202 provides a ligand contact to substrate. 3 residues coordinate Mg(2+): Asp-205, Asp-209, and Asp-235. The next 6 membrane-spanning stretches (helical) occupy residues 251–271 (TAAENIGAMILGVGLYPIFGW), 274–294 (ILFPLVARAIGIIASIIGIFF), 311–331 (GYFVTTVVNLIALFFAVKVML), 343–363 (YLLLYGAVVTGVILSYIFVFL), 403–423 (LPVIFISAAIYIAYKLGEMAI), and 431–451 (LYGTAIATMGMLSTTAYILAM). A Mg(2+)-binding site is contributed by Asp-459. Transmembrane regions (helical) follow at residues 495–515 (YAIGSAALATFLLFSAYLDEV), 535–555 (EVFIGAFIGAMIVYLFSSTAI), 602–622 (EMVIPGLIVVVTPILVGVILG), and 624–644 (EAAAAFLMIGTISGVILALYL). Asp-652, Asp-678, and Asp-682 together coordinate Ca(2+). Residue Lys-685 coordinates substrate. A helical membrane pass occupies residues 690 to 710 (PSLHVLIKLISTITLVFVALF).

This sequence belongs to the H(+)-translocating pyrophosphatase (TC 3.A.10) family. K(+)-insensitive subfamily. As to quaternary structure, homodimer. Requires Mg(2+) as cofactor.

The protein localises to the cell membrane. The enzyme catalyses diphosphate + H2O + H(+)(in) = 2 phosphate + 2 H(+)(out). In terms of biological role, proton pump that utilizes the energy of pyrophosphate hydrolysis as the driving force for proton movement across the membrane. Generates a proton motive force. The sequence is that of K(+)-insensitive pyrophosphate-energized proton pump from Caldanaerobacter subterraneus subsp. tengcongensis (strain DSM 15242 / JCM 11007 / NBRC 100824 / MB4) (Thermoanaerobacter tengcongensis).